A 192-amino-acid chain; its full sequence is Xanthine phosphoribosyltransferase (192 aa).

Residues L20 and N27 each contribute to the xanthine site. 5-phospho-alpha-D-ribose 1-diphosphate is bound at residue 128-132 (ANGDA). Xanthine is bound at residue K156.

This sequence belongs to the purine/pyrimidine phosphoribosyltransferase family. Xpt subfamily. In terms of assembly, homodimer.

It is found in the cytoplasm. The catalysed reaction is XMP + diphosphate = xanthine + 5-phospho-alpha-D-ribose 1-diphosphate. Its pathway is purine metabolism; XMP biosynthesis via salvage pathway; XMP from xanthine: step 1/1. Converts the preformed base xanthine, a product of nucleic acid breakdown, to xanthosine 5'-monophosphate (XMP), so it can be reused for RNA or DNA synthesis. This chain is Xanthine phosphoribosyltransferase, found in Staphylococcus carnosus (strain TM300).